A 222-amino-acid chain; its full sequence is MHESRLASARLYLCTDARRERGDLAQFAEAALAGGVDIIQLRDKGSPGELRFGPLQARDELAACEILADAAHRYGALFAVNDRADIARAAGADVLHLGQRDLPVNVARQILAPDTLIGRSTHDPDQVAAAAAGDADYFCVGPCWPTPTKPGRAAPGLGLVRVAAELGGDDKPWFAIGGINAQRLPAVLDAGARRIVVVRAITSADDPRAAAEQLRSALTAAN.

4-amino-2-methyl-5-(diphosphooxymethyl)pyrimidine is bound by residues 40–44 (QLRDK) and Asn-81. Mg(2+) contacts are provided by Asp-82 and Asp-101. 4-amino-2-methyl-5-(diphosphooxymethyl)pyrimidine is bound at residue Ser-120. 146–148 (TPT) contributes to the 2-[(2R,5Z)-2-carboxy-4-methylthiazol-5(2H)-ylidene]ethyl phosphate binding site. Lys-149 provides a ligand contact to 4-amino-2-methyl-5-(diphosphooxymethyl)pyrimidine. Gly-178 is a binding site for 2-[(2R,5Z)-2-carboxy-4-methylthiazol-5(2H)-ylidene]ethyl phosphate.

The protein belongs to the thiamine-phosphate synthase family. Requires Mg(2+) as cofactor.

It catalyses the reaction 2-[(2R,5Z)-2-carboxy-4-methylthiazol-5(2H)-ylidene]ethyl phosphate + 4-amino-2-methyl-5-(diphosphooxymethyl)pyrimidine + 2 H(+) = thiamine phosphate + CO2 + diphosphate. The catalysed reaction is 2-(2-carboxy-4-methylthiazol-5-yl)ethyl phosphate + 4-amino-2-methyl-5-(diphosphooxymethyl)pyrimidine + 2 H(+) = thiamine phosphate + CO2 + diphosphate. The enzyme catalyses 4-methyl-5-(2-phosphooxyethyl)-thiazole + 4-amino-2-methyl-5-(diphosphooxymethyl)pyrimidine + H(+) = thiamine phosphate + diphosphate. It participates in cofactor biosynthesis; thiamine diphosphate biosynthesis; thiamine phosphate from 4-amino-2-methyl-5-diphosphomethylpyrimidine and 4-methyl-5-(2-phosphoethyl)-thiazole: step 1/1. In terms of biological role, condenses 4-methyl-5-(beta-hydroxyethyl)thiazole monophosphate (THZ-P) and 2-methyl-4-amino-5-hydroxymethyl pyrimidine pyrophosphate (HMP-PP) to form thiamine monophosphate (TMP). This is Thiamine-phosphate synthase from Mycobacterium tuberculosis (strain ATCC 25177 / H37Ra).